The primary structure comprises 362 residues: Carbamoyl phosphate synthase small chain (362 aa).

Residues 1–169 (MGKRLLILED…TKTAYPAPGV (169 aa)) are CPSase. Residues S46, G220, and G222 each contribute to the L-glutamine site. The region spanning 172–358 (NIVLVDFGLK…LELIDAFQLE (187 aa)) is the Glutamine amidotransferase type-1 domain. The active-site Nucleophile is the C247. Residues M248, Q251, N289, G291, and Y292 each contribute to the L-glutamine site. Active-site residues include H331 and D333.

Belongs to the CarA family. Composed of two chains; the small (or glutamine) chain promotes the hydrolysis of glutamine to ammonia, which is used by the large (or ammonia) chain to synthesize carbamoyl phosphate. Tetramer of heterodimers (alpha,beta)4.

It carries out the reaction hydrogencarbonate + L-glutamine + 2 ATP + H2O = carbamoyl phosphate + L-glutamate + 2 ADP + phosphate + 2 H(+). The enzyme catalyses L-glutamine + H2O = L-glutamate + NH4(+). It functions in the pathway amino-acid biosynthesis; L-arginine biosynthesis; carbamoyl phosphate from bicarbonate: step 1/1. Its pathway is pyrimidine metabolism; UMP biosynthesis via de novo pathway; (S)-dihydroorotate from bicarbonate: step 1/3. Its function is as follows. Small subunit of the glutamine-dependent carbamoyl phosphate synthetase (CPSase). CPSase catalyzes the formation of carbamoyl phosphate from the ammonia moiety of glutamine, carbonate, and phosphate donated by ATP, constituting the first step of 2 biosynthetic pathways, one leading to arginine and/or urea and the other to pyrimidine nucleotides. The small subunit (glutamine amidotransferase) binds and cleaves glutamine to supply the large subunit with the substrate ammonia. The sequence is that of Carbamoyl phosphate synthase small chain from Streptococcus mutans serotype c (strain ATCC 700610 / UA159).